We begin with the raw amino-acid sequence, 196 residues long: MLERIKVCFTESIQTQIAAAEALPEAISRAAMTLVQSLLNGNKILCCGNGTSAANAQHFAASMINRFETERPSLPAIALNTDNVVLTAIANDRLHDEIYAKQVRALGHAGDILLAISTRGNSRDIVKAVEAAVTRDMTIVALTGYDGGELAGLLGPQDVEIRIPSHRSARIQEMHMLTVNCLCDLIDNTLFPHQDD.

The SIS domain maps to 34 to 196 (LVQSLLNGNK…DNTLFPHQDD (163 aa)).

This sequence belongs to the SIS family. DiaA subfamily. Homotetramer; dimer of dimers.

Its function is as follows. Required for the timely initiation of chromosomal replication via direct interactions with the DnaA initiator protein. In Enterobacter sp. (strain 638), this protein is DnaA initiator-associating protein DiaA.